The following is a 125-amino-acid chain: Inner membrane protein YbaN (125 aa).

Over 1-6 the chain is Cytoplasmic; the sequence is MQRIIL. A helical membrane pass occupies residues 7 to 26; it reads IIIGWLAVVLGTLGVVLPVL. Residues 27–45 lie on the Periplasmic side of the membrane; that stretch reads PTTPFILLAAWCFARSSPR. Residues 46-63 form a helical membrane-spanning segment; sequence FHAWLLYRSWFGSYLRFW. Residues 64–74 lie on the Cytoplasmic side of the membrane; the sequence is QKHHAMPRGVK. The helical transmembrane segment at 75-92 threads the bilayer; it reads PRAILLILLTFAISLWFV. Residues 93–95 are Periplasmic-facing; the sequence is QMP. A helical transmembrane segment spans residues 96 to 118; sequence WVRIMLLVILACLLFYMWRIPVI. The Cytoplasmic segment spans residues 119–125; it reads DEKQEKH.

The protein localises to the cell inner membrane. In Escherichia coli O157:H7, this protein is Inner membrane protein YbaN (ybaN).